Here is a 652-residue protein sequence, read N- to C-terminus: MEKRMKELVDKLNQYAKEYYTEDNPSVSDAEYDKLYRELVTLEAEHPELVQADSPTHRVGGLVLDGFEKYQHEYPLYSLQDAFSREELDAFDKRIKSEFPNADYMAELKIDGLSISLTYVDGILQVGATRGDGSVGENITENVKRISDIPLKLDQPLNITVRGECYLPRAEFERINTQRQENGEAEFANPRNAAAGTLRQLDTKVVAERRLATFFYQEAGPTERLTQNDVLNEVAELGFSVNPRRIVTSSMDEIWDFIQAVGQDRDHLAYDIDGVVIKVNSLAMQEELGFTVKAPRWAIAYKFPAEEKEAKLLSVDWQVGRTGVVTPTANLTPVQLAGTTVSRATLHNVDYITEKDIRIGDTVIVYKAGDIIPAVLRVVESKRTTQEAMPVPSQCPSCGSGLLHFEDEVALRCINPSCPAQIKEGLIHFASRDAMNISGMGPSVVEKLFKAELVKEVADIYGLNSQDFLQLEGFKEKSAEKLYAAIQASKENSAEKLLYGLGIRHVGAKVSKQLLESFGTIKELASADVQAIAAVDGLGEVIAKSIQRYFAKEEAQVLLKELESYGVNLSYLGQKVTDDAILSGKTVVLTGKLEHLKRSEAKAKLEALGAKVTGSVSKKTDLVVAGSDAGSKLEKAQSLGIEVKDEAWLLDL.

Residues 29-33 (DAEYD), 78-79 (SL), and Glu-107 contribute to the NAD(+) site. Lys-109 serves as the catalytic N6-AMP-lysine intermediate. The NAD(+) site is built by Arg-130, Glu-164, Lys-278, and Lys-302. Positions 395, 398, 413, and 418 each coordinate Zn(2+). One can recognise a BRCT domain in the interval 577–652 (TDDAILSGKT…VKDEAWLLDL (76 aa)).

Belongs to the NAD-dependent DNA ligase family. LigA subfamily. It depends on Mg(2+) as a cofactor. Mn(2+) is required as a cofactor.

The catalysed reaction is NAD(+) + (deoxyribonucleotide)n-3'-hydroxyl + 5'-phospho-(deoxyribonucleotide)m = (deoxyribonucleotide)n+m + AMP + beta-nicotinamide D-nucleotide.. In terms of biological role, DNA ligase that catalyzes the formation of phosphodiester linkages between 5'-phosphoryl and 3'-hydroxyl groups in double-stranded DNA using NAD as a coenzyme and as the energy source for the reaction. It is essential for DNA replication and repair of damaged DNA. The sequence is that of DNA ligase from Streptococcus thermophilus (strain ATCC BAA-491 / LMD-9).